Reading from the N-terminus, the 307-residue chain is MRIVFAGTPDFAVPSLRSVTQRADVVAVYTQPDRPAGRGRELMPSPVKLEAVARGLPVYQPQTLRSPEVLEQLRALRPDLIVVVAYGVILPEAVLTIPDDGCWNVHASLLPRWRGAAPIQRAIEAGDTETGVCLMQMEAGLDTGPVLMSLKTPINAHETSGQLHDRLAEMGAQLLSDGLGLLRAGLRPVPQPQLAVGVTYAHKLGKVESRLDWEQPAERLACRVRAFQPWPVAEVVLSGERVRIHEALALDLDHSQPPGTVLAASKEGIDVACVQGALRLCRLQREGGKAITVADYLNARRDLQVRA.

(6S)-5,6,7,8-tetrahydrofolate is bound at residue 108–111; it reads SLLP.

It belongs to the Fmt family.

It catalyses the reaction L-methionyl-tRNA(fMet) + (6R)-10-formyltetrahydrofolate = N-formyl-L-methionyl-tRNA(fMet) + (6S)-5,6,7,8-tetrahydrofolate + H(+). Its function is as follows. Attaches a formyl group to the free amino group of methionyl-tRNA(fMet). The formyl group appears to play a dual role in the initiator identity of N-formylmethionyl-tRNA by promoting its recognition by IF2 and preventing the misappropriation of this tRNA by the elongation apparatus. This is Methionyl-tRNA formyltransferase from Xylella fastidiosa (strain M23).